A 556-amino-acid polypeptide reads, in one-letter code: DNA ligase (556 aa).

E245 contacts ATP. The active-site N6-AMP-lysine intermediate is the K247. Residues R252, R267, E296, F336, R408, and K414 each coordinate ATP.

Belongs to the ATP-dependent DNA ligase family. It depends on Mg(2+) as a cofactor.

The catalysed reaction is ATP + (deoxyribonucleotide)n-3'-hydroxyl + 5'-phospho-(deoxyribonucleotide)m = (deoxyribonucleotide)n+m + AMP + diphosphate.. Functionally, DNA ligase that seals nicks in double-stranded DNA during DNA replication, DNA recombination and DNA repair. The protein is DNA ligase of Methanosphaerula palustris (strain ATCC BAA-1556 / DSM 19958 / E1-9c).